We begin with the raw amino-acid sequence, 219 residues long: Thymidylate kinase (219 aa).

10–17 (GLEGAGKT) contacts ATP.

The protein belongs to the thymidylate kinase family.

The enzyme catalyses dTMP + ATP = dTDP + ADP. In terms of biological role, phosphorylation of dTMP to form dTDP in both de novo and salvage pathways of dTTP synthesis. The sequence is that of Thymidylate kinase from Pectobacterium carotovorum subsp. carotovorum (strain PC1).